Here is a 684-residue protein sequence, read N- to C-terminus: Mitochondrial translation factor ATP22 (684 aa).

A mitochondrion-targeting transit peptide spans 1 to 56 (MLKCICRVYSQPLAQMVTSPLFKHMGSAGTYTILPITNLRHLSTKNCPLKIKSNRS).

This sequence belongs to the ATP22 family.

Its subcellular location is the mitochondrion inner membrane. In terms of biological role, translation factor specific for subunit 6 of the mitochondrial ATPase. Required for assembly of the CF(0) component of the ATPase. The chain is Mitochondrial translation factor ATP22 (ATP22) from Saccharomyces cerevisiae (strain AWRI1631) (Baker's yeast).